Consider the following 354-residue polypeptide: Guanine nucleotide-binding protein G(i) subunit alpha (354 aa).

A lipid anchor (N-myristoyl glycine) is attached at glycine 2. The S-palmitoyl cysteine moiety is linked to residue cysteine 3. The region spanning 32–354 (REVKLLLLGA…KNNLKDCGLF (323 aa)) is the G-alpha domain. The tract at residues 35-48 (KLLLLGAGESGKST) is G1 motif. GTP-binding positions include 40–47 (GAGESGKS), 175–181 (LRTRVKT), 200–204 (DVGGQ), 269–272 (NKKD), and alanine 326. 2 residues coordinate Mg(2+): serine 47 and threonine 181. Residues 173-181 (DVLRTRVKT) are G2 motif. The interval 196–205 (FKMFDVGGQR) is G3 motif. The interval 265 to 272 (ILFLNKKD) is G4 motif. Residues 324–329 (TCATDT) form a G5 motif region.

It belongs to the G-alpha family. G(i/o/t/z) subfamily. In terms of assembly, g proteins are composed of 3 units; alpha, beta and gamma. The alpha chain contains the guanine nucleotide binding site.

Its function is as follows. Guanine nucleotide-binding proteins (G proteins) are involved as modulators or transducers in various transmembrane signaling systems. The sequence is that of Guanine nucleotide-binding protein G(i) subunit alpha from Planorbella trivolvis (Marsh rams-horn).